The primary structure comprises 193 residues: GTP cyclohydrolase 1 (193 aa).

Positions 73, 76, and 144 each coordinate Zn(2+).

It belongs to the GTP cyclohydrolase I family. Homomer.

The enzyme catalyses GTP + H2O = 7,8-dihydroneopterin 3'-triphosphate + formate + H(+). The protein operates within cofactor biosynthesis; 7,8-dihydroneopterin triphosphate biosynthesis; 7,8-dihydroneopterin triphosphate from GTP: step 1/1. This Hyperthermus butylicus (strain DSM 5456 / JCM 9403 / PLM1-5) protein is GTP cyclohydrolase 1.